We begin with the raw amino-acid sequence, 340 residues long: Glyceraldehyde-3-phosphate dehydrogenase (340 aa).

NAD(+) is bound by residues 12 to 13 (RI), Asp40, Lys85, and Ser128. Residues 158 to 160 (SCT), Thr189, Arg204, 217 to 218 (TG), and Arg240 each bind D-glyceraldehyde 3-phosphate. Cys159 acts as the Nucleophile in catalysis. Residue Lys257 forms an Isoglutamyl lysine isopeptide (Lys-Gln) (interchain with Q-Cter in protein Pup) linkage. Asn321 contributes to the NAD(+) binding site.

It belongs to the glyceraldehyde-3-phosphate dehydrogenase family. In terms of assembly, homotetramer.

It is found in the cytoplasm. The enzyme catalyses D-glyceraldehyde 3-phosphate + phosphate + NAD(+) = (2R)-3-phospho-glyceroyl phosphate + NADH + H(+). Its pathway is carbohydrate degradation; glycolysis; pyruvate from D-glyceraldehyde 3-phosphate: step 1/5. In terms of biological role, catalyzes the oxidative phosphorylation of glyceraldehyde 3-phosphate (G3P) to 1,3-bisphosphoglycerate (BPG) using the cofactor NAD. The first reaction step involves the formation of a hemiacetal intermediate between G3P and a cysteine residue, and this hemiacetal intermediate is then oxidized to a thioester, with concomitant reduction of NAD to NADH. The reduced NADH is then exchanged with the second NAD, and the thioester is attacked by a nucleophilic inorganic phosphate to produce BPG. This is Glyceraldehyde-3-phosphate dehydrogenase (gapA) from Mycolicibacterium smegmatis (strain ATCC 700084 / mc(2)155) (Mycobacterium smegmatis).